The sequence spans 598 residues: UvrABC system protein C (598 aa).

One can recognise a GIY-YIG domain in the interval 13–92; sequence SSPGVYLMKD…IKKYQPRYNV (80 aa). The region spanning 206-241 is the UVR domain; it reads DTTIANLEEAIKKASQEHKFEHAAALYRTLTLIRQT.

This sequence belongs to the UvrC family. As to quaternary structure, interacts with UvrB in an incision complex.

Its subcellular location is the cytoplasm. Functionally, the UvrABC repair system catalyzes the recognition and processing of DNA lesions. UvrC both incises the 5' and 3' sides of the lesion. The N-terminal half is responsible for the 3' incision and the C-terminal half is responsible for the 5' incision. The sequence is that of UvrABC system protein C from Chlamydia muridarum (strain MoPn / Nigg).